We begin with the raw amino-acid sequence, 248 residues long: DNA repair protein RecO (248 aa).

The protein belongs to the RecO family.

Functionally, involved in DNA repair and RecF pathway recombination. In Oleidesulfovibrio alaskensis (strain ATCC BAA-1058 / DSM 17464 / G20) (Desulfovibrio alaskensis), this protein is DNA repair protein RecO.